A 365-amino-acid polypeptide reads, in one-letter code: 2-aminoethylphosphonate--pyruvate transaminase (365 aa).

Residue lysine 194 is modified to N6-(pyridoxal phosphate)lysine.

Belongs to the class-V pyridoxal-phosphate-dependent aminotransferase family. PhnW subfamily. As to quaternary structure, homodimer. It depends on pyridoxal 5'-phosphate as a cofactor.

The enzyme catalyses (2-aminoethyl)phosphonate + pyruvate = phosphonoacetaldehyde + L-alanine. Functionally, involved in phosphonate degradation. This chain is 2-aminoethylphosphonate--pyruvate transaminase, found in Bacillus thuringiensis subsp. konkukian (strain 97-27).